The primary structure comprises 256 residues: Flap endonuclease Xni (256 aa).

Mg(2+) is bound at residue Asp105. One can recognise a 5'-3' exonuclease domain in the interval Ser164–Val250. Residues Met172, Ala173, Pro181, Ile183, and Ile186 each contribute to the K(+) site. The interaction with DNA stretch occupies residues Gly185–Ser190.

Belongs to the Xni family. Mg(2+) is required as a cofactor. Requires K(+) as cofactor.

Its function is as follows. Has flap endonuclease activity. During DNA replication, flap endonucleases cleave the 5'-overhanging flap structure that is generated by displacement synthesis when DNA polymerase encounters the 5'-end of a downstream Okazaki fragment. The chain is Flap endonuclease Xni from Shewanella loihica (strain ATCC BAA-1088 / PV-4).